The chain runs to 100 residues: uncharacterized protein (100 aa).

Residue Lys98 forms an Isoglutamyl lysine isopeptide (Lys-Gln) (interchain with Q-Cter in protein Pup) linkage.

This is an uncharacterized protein from Mycobacterium tuberculosis (strain CDC 1551 / Oshkosh).